We begin with the raw amino-acid sequence, 525 residues long: Lysine--tRNA ligase (525 aa).

A 'HIGH' region motif is present at residues 44–52 (PSGLPHIGT). The 'KMSKS' region motif lies at 290–294 (KISKS). Residue Lys293 participates in ATP binding.

The protein belongs to the class-I aminoacyl-tRNA synthetase family.

The protein resides in the cytoplasm. The enzyme catalyses tRNA(Lys) + L-lysine + ATP = L-lysyl-tRNA(Lys) + AMP + diphosphate. This Rickettsia felis (strain ATCC VR-1525 / URRWXCal2) (Rickettsia azadi) protein is Lysine--tRNA ligase.